A 286-amino-acid polypeptide reads, in one-letter code: Diaminopimelate epimerase (286 aa).

Residues asparagine 13 and asparagine 66 each coordinate substrate. Cysteine 75 serves as the catalytic Proton donor. Residues 76–77 (GN), asparagine 165, asparagine 198, and 216–217 (ER) contribute to the substrate site. Cysteine 225 acts as the Proton acceptor in catalysis. 226-227 (GT) contributes to the substrate binding site.

It belongs to the diaminopimelate epimerase family. In terms of assembly, homodimer.

Its subcellular location is the cytoplasm. It carries out the reaction (2S,6S)-2,6-diaminopimelate = meso-2,6-diaminopimelate. It participates in amino-acid biosynthesis; L-lysine biosynthesis via DAP pathway; DL-2,6-diaminopimelate from LL-2,6-diaminopimelate: step 1/1. In terms of biological role, catalyzes the stereoinversion of LL-2,6-diaminopimelate (L,L-DAP) to meso-diaminopimelate (meso-DAP), a precursor of L-lysine and an essential component of the bacterial peptidoglycan. The polypeptide is Diaminopimelate epimerase (Oceanobacillus iheyensis (strain DSM 14371 / CIP 107618 / JCM 11309 / KCTC 3954 / HTE831)).